A 524-amino-acid polypeptide reads, in one-letter code: Cytokinin dehydrogenase 7 (524 aa).

The 181-residue stretch at 58 to 238 (NCVKPLAVVR…TRARVLLQPA (181 aa)) folds into the FAD-binding PCMH-type domain. Ala-91, Gly-93, Asn-94, and Gly-95 together coordinate FAD. A Pros-8alpha-FAD histidine modification is found at His-96. FAD-binding residues include Ser-97, Gln-101, Asp-162, Thr-167, Ser-173, Val-177, Ile-228, Tyr-479, Ser-514, and Gln-517.

The protein belongs to the oxygen-dependent FAD-linked oxidoreductase family. FAD serves as cofactor. In terms of tissue distribution, expressed in the vasculature of roots, hypocotyls, cotyledons and leaves of young seedlings. In flowers, expressed in the transmitting tissue of the gynoecium prior to pollination. Expressed in the mature embryo sac with maximum activity in the egg cell and the synergids.

It localises to the cytoplasm. The protein resides in the cytosol. It catalyses the reaction N(6)-dimethylallyladenine + A + H2O = 3-methyl-2-butenal + adenine + AH2. In terms of biological role, catalyzes the oxidation of cytokinins, a family of N(6)-substituted adenine derivatives that are plant hormones, where the substituent is an isopentenyl group. Catalyzes in vitro the oxidation of various types of cytokinin nucleotides that are known as direct products of cytokinin biosynthesis. This chain is Cytokinin dehydrogenase 7 (CKX7), found in Arabidopsis thaliana (Mouse-ear cress).